The chain runs to 249 residues: Methyltransferase 1 (249 aa).

The protein belongs to the FkbM methyltransferase family.

Its pathway is secondary metabolite biosynthesis. In terms of biological role, methyltransferase; part of the pathway that mediates the biosynthesis of tenellin-type 2-pyridones, iron-chelating compounds involved in iron stress tolerance, competition with the natural competitor fungus Metarhizium robertsii and insect hosts infection. Methylates pyridovericin-N-O-(beta-D-glucopyranoside) produced by the UDP-glucosyltransferase GT1 to yield pyridovericin-N-O-(4-O-methyl-beta-D-glucopyranoside) (PMGP). The pathway begins with the assembly of the polyketide-amino acid backbone by the hybrid PKS-NRPS tenS with the help of the enoyl reductase tenC. These enzymes catalyze the synthesis of the pyrrolidine-2-dione intermediates pretellinin A, 11-hydropretellenin A, 12-hydropretellenin A, 13-hydropretellenin A, 14-hydropretellenin A, 12-oxopretellenin A and prototellinin D. The cytochrome P450 monooxygenase tenA then catalyzes an oxidative ring expansion of pretenellin A and 14-hydropretellenin A to form the 2-pyridone core, leading to pretenellin B and pyridovericin, respectively. The cytochrome P450 monooxygenase tenB is then required for the selective N-hydroxylation of the 2-pyridone nitrogen of yield tellinin and 15-hydroxytellenin (15-HT), respectively. The UDP-glucosyltransferase GT1 and the methyltransferase MT1, located outside the tenS gene cluster, contribute to the stepwise glycosylation and methylation of 15-HT to obtain the glycoside pyridovericin-N-O-(4-O-methyl-beta-D-glucopyranoside) (PMGP). Additional related compounds such as 1-O-methyl-15-HT, (8Z)-1-O-methyl-15-HT, and O-methyltenellin A are also produced but the enzymes involved in their biosynthesis have still to be determined. This Beauveria bassiana (strain ARSEF 2860) (White muscardine disease fungus) protein is Methyltransferase 1.